The sequence spans 113 residues: U11-theraphotoxin-Hhn1a (113 aa).

The N-terminal stretch at 1–21 (MNTVRVAFLLVFVLAVSLGQA) is a signal peptide. Residues 22 to 74 (DKDENRMEMQEKTEQGKSYLDFAENLLLQKLEELEAKLLEEDSEESRNSRQKR) constitute a propeptide that is removed on maturation. Residues 61–83 (EEDSEESRNSRQKRCIGEGVPCD) are disordered. 3 disulfide bridges follow: Cys75–Cys90, Cys82–Cys95, and Cys89–Cys110.

This sequence belongs to the neurotoxin 14 (magi-1) family. 01 (HNTX-16) subfamily. As to expression, expressed by the venom gland.

The protein resides in the secreted. Probable ion channel inhibitor. This chain is U11-theraphotoxin-Hhn1a, found in Cyriopagopus hainanus (Chinese bird spider).